We begin with the raw amino-acid sequence, 208 residues long: NAD(P)H-hydrate epimerase (208 aa).

One can recognise a YjeF N-terminal domain in the interval Ile-10–Asn-208. Residue Asn-54–Asp-58 coordinates (6S)-NADPHX. The K(+) site is built by Asn-55 and Asp-117. (6S)-NADPHX is bound by residues Gly-121–Pro-127 and Asp-150. Ser-153 contributes to the K(+) binding site.

The protein belongs to the NnrE/AIBP family. Requires K(+) as cofactor.

The enzyme catalyses (6R)-NADHX = (6S)-NADHX. It catalyses the reaction (6R)-NADPHX = (6S)-NADPHX. Functionally, catalyzes the epimerization of the S- and R-forms of NAD(P)HX, a damaged form of NAD(P)H that is a result of enzymatic or heat-dependent hydration. This is a prerequisite for the S-specific NAD(P)H-hydrate dehydratase to allow the repair of both epimers of NAD(P)HX. The chain is NAD(P)H-hydrate epimerase from Achromobacter xylosoxidans (strain A8).